The following is a 176-amino-acid chain: Large ribosomal subunit protein bL19 (176 aa).

This sequence belongs to the bacterial ribosomal protein bL19 family.

Functionally, this protein is located at the 30S-50S ribosomal subunit interface and may play a role in the structure and function of the aminoacyl-tRNA binding site. The chain is Large ribosomal subunit protein bL19 from Sinorhizobium fredii (strain NBRC 101917 / NGR234).